We begin with the raw amino-acid sequence, 214 residues long: Large ribosomal subunit protein uL16 (214 aa).

Belongs to the universal ribosomal protein uL16 family. In terms of assembly, component of the large ribosomal subunit. Mature ribosomes consist of a small (40S) and a large (60S) subunit. The 40S subunit contains about 33 different proteins and 1 molecule of RNA (18S). The 60S subunit contains about 49 different proteins and 3 molecules of RNA (28S, 5.8S and 5S).

This Caenorhabditis elegans protein is Large ribosomal subunit protein uL16 (rpl-10L).